The chain runs to 351 residues: Glycerol-3-phosphate dehydrogenase [NAD(P)+] (351 aa).

NADPH contacts are provided by S12, W13, H33, and K114. Residues K114, G145, and S147 each coordinate sn-glycerol 3-phosphate. A149 is a binding site for NADPH. 5 residues coordinate sn-glycerol 3-phosphate: K200, D253, S263, R264, and N265. The active-site Proton acceptor is the K200. NADPH is bound at residue R264. Positions 288 and 290 each coordinate NADPH.

This sequence belongs to the NAD-dependent glycerol-3-phosphate dehydrogenase family.

The protein localises to the cytoplasm. It catalyses the reaction sn-glycerol 3-phosphate + NAD(+) = dihydroxyacetone phosphate + NADH + H(+). It carries out the reaction sn-glycerol 3-phosphate + NADP(+) = dihydroxyacetone phosphate + NADPH + H(+). It functions in the pathway membrane lipid metabolism; glycerophospholipid metabolism. Functionally, catalyzes the reduction of the glycolytic intermediate dihydroxyacetone phosphate (DHAP) to sn-glycerol 3-phosphate (G3P), the key precursor for phospholipid synthesis. In Lacticaseibacillus paracasei (strain ATCC 334 / BCRC 17002 / CCUG 31169 / CIP 107868 / KCTC 3260 / NRRL B-441) (Lactobacillus paracasei), this protein is Glycerol-3-phosphate dehydrogenase [NAD(P)+].